Consider the following 147-residue polypeptide: Hemoglobin subunit epsilon (147 aa).

A Globin domain is found at 3–147; it reads HFTAEEKAII…VATALAHKYH (145 aa). 2 positions are modified to phosphoserine: Ser-14 and Ser-51. Heme b is bound by residues His-64 and His-93.

The protein belongs to the globin family. In terms of assembly, heterotetramer of two alpha chains and two epsilon chains in early embryonic hemoglobin Gower-2; two zeta chains and two epsilon chains in early embryonic hemoglobin Gower-1. Red blood cells.

The epsilon chain is a beta-type chain of early mammalian embryonic hemoglobin. The polypeptide is Hemoglobin subunit epsilon (HBE1) (Otolemur crassicaudatus (Brown greater galago)).